Here is a 459-residue protein sequence, read N- to C-terminus: Argininosuccinate lyase (459 aa).

It belongs to the lyase 1 family. Argininosuccinate lyase subfamily.

The protein localises to the cytoplasm. The enzyme catalyses 2-(N(omega)-L-arginino)succinate = fumarate + L-arginine. Its pathway is amino-acid biosynthesis; L-arginine biosynthesis; L-arginine from L-ornithine and carbamoyl phosphate: step 3/3. This is Argininosuccinate lyase from Oceanobacillus iheyensis (strain DSM 14371 / CIP 107618 / JCM 11309 / KCTC 3954 / HTE831).